The following is a 431-amino-acid chain: Protein prenyltransferase alpha subunit repeat-containing protein 1-B (431 aa).

PFTA repeat units follow at residues 85–118 (ELID…TLNP), 120–153 (KDLQ…VQEL), 178–211 (EEMH…GNLN), 217–250 (DELS…LCKT), and 293–326 (EEMK…HQLL). The disordered stretch occupies residues 363 to 383 (PMDVDGMSDPNKQGYTQETKR). One copy of the PFTA 6 repeat lies at 394 to 431 (SLDSELRFINCVLTNCCSPEQSRFAASYRKWLLSLQGY).

Belongs to the protein prenyltransferase subunit alpha family.

This Xenopus laevis (African clawed frog) protein is Protein prenyltransferase alpha subunit repeat-containing protein 1-B (ptar1-b).